Here is a 231-residue protein sequence, read N- to C-terminus: Ion-translocating oxidoreductase complex subunit E (231 aa).

Helical transmembrane passes span 18–38 (ALVQ…ATNA), 39–59 (LGLG…ISTL), 63–83 (TPAE…VSAV), 86–106 (LINA…PLIV), 125–145 (ALSA…MFVL), and 182–202 (PFLL…MLAG).

The protein belongs to the NqrDE/RnfAE family. As to quaternary structure, the complex is composed of six subunits: RsxA, RsxB, RsxC, RsxD, RsxE and RsxG.

The protein localises to the cell inner membrane. Part of a membrane-bound complex that couples electron transfer with translocation of ions across the membrane. Required to maintain the reduced state of SoxR. The protein is Ion-translocating oxidoreductase complex subunit E of Escherichia coli O127:H6 (strain E2348/69 / EPEC).